The primary structure comprises 297 residues: HTH-type transcriptional regulator PerR (297 aa).

In terms of domain architecture, HTH lysR-type spans 7–64 (APLNLLRAFEAAGRTGAFALAASELELSPSAISHAIRKLENLLDVRLFQRSTREITLT). The segment at residues 24–44 (FALAASELELSPSAISHAIRK) is a DNA-binding region (H-T-H motif).

The protein belongs to the LysR transcriptional regulatory family.

In terms of biological role, apparent regulatory gene involved in peroxide resistance in stationary phase. This chain is HTH-type transcriptional regulator PerR (perR), found in Escherichia coli (strain K12).